A 155-amino-acid chain; its full sequence is Desiccation-related protein clone PCC6-19 (155 aa).

A disordered region spans residues 1–155 (MAQFGGEKYG…IKEKLPGGQH (155 aa)). 2 stretches are compositionally biased toward gly residues: residues 27-39 (AHRG…GGQQ) and 47-76 (GVLG…GALG). Positions 83-92 (GSSSSSSSSE) are enriched in low complexity. The segment covering 118–135 (TTTDQQQYGTAATHGQAQ) has biased composition (polar residues). Over residues 136–155 (QHEKKGIMDKIKEKLPGGQH) the composition is skewed to basic and acidic residues.

This sequence belongs to the plant dehydrin family.

In Craterostigma plantagineum (Blue gem), this protein is Desiccation-related protein clone PCC6-19.